The following is a 462-amino-acid chain: Argininosuccinate lyase (462 aa).

This sequence belongs to the lyase 1 family. Argininosuccinate lyase subfamily.

It is found in the cytoplasm. The enzyme catalyses 2-(N(omega)-L-arginino)succinate = fumarate + L-arginine. It functions in the pathway amino-acid biosynthesis; L-arginine biosynthesis; L-arginine from L-ornithine and carbamoyl phosphate: step 3/3. The sequence is that of Argininosuccinate lyase from Prochlorococcus marinus (strain MIT 9211).